The primary structure comprises 433 residues: Trigger factor (433 aa).

Residues 163–248 (GDFVTFDFKG…IKEIKVKELP (86 aa)) enclose the PPIase FKBP-type domain.

The protein belongs to the FKBP-type PPIase family. Tig subfamily.

It localises to the cytoplasm. It carries out the reaction [protein]-peptidylproline (omega=180) = [protein]-peptidylproline (omega=0). In terms of biological role, involved in protein export. Acts as a chaperone by maintaining the newly synthesized protein in an open conformation. Functions as a peptidyl-prolyl cis-trans isomerase. This Geotalea uraniireducens (strain Rf4) (Geobacter uraniireducens) protein is Trigger factor.